We begin with the raw amino-acid sequence, 691 residues long: Calcium-binding and coiled-coil domain-containing protein 1 (691 aa).

The p300 KIX-binding stretch occupies residues 1–30 (MEESSLSRAPSRGGVNFLNVARTYIPNTKV). The segment at 1-190 (MEESSLSRAP…VQELEAALAT (190 aa)) is N-terminal AD (CTNNB1 binding site). Ser4 is modified (phosphoserine). The interval 45–125 (SDWIGIFKVE…FQFREPRPMD (81 aa)) is interaction with GATA1. 3 coiled-coil regions span residues 145–205 (KATV…YKGL), 232–339 (ELED…AELE), and 417–514 (QSME…ADEK). The segment at 501–691 (RKLEARLEKV…FSTQDPFTFE (191 aa)) is C-terminal AD (CTNNB1 binding site); interaction with CCAR1. A disordered region spans residues 512-605 (DEKWTEDAAT…DSEAEDEKSV (94 aa)). A UBZ1-type zinc finger spans residues 653–679 (WKECPICKERFPAESDKDALEGHMDGH). Zn(2+)-binding residues include Cys656, Cys659, His675, and His679.

It belongs to the CALCOCO family. In terms of assembly, part of a calphoglin complex consisting of CALCOCO1, PPA1 and PGM. Interacts with the bHLH-PAS domains of GRIP1, AHR and ARNT. Interacts with CTNNB1 via both its N- and C-terminal regions. Interacts with EP300. Interacts with CCAR1 (via N-terminus) and GATA1. In terms of tissue distribution, expressed in all tissues examined except spleen, with high levels of expression in the heart and kidney.

The protein localises to the cytoplasm. Its subcellular location is the nucleus. Its function is as follows. Functions as a coactivator for aryl hydrocarbon and nuclear receptors (NR). Recruited to promoters through its contact with the N-terminal basic helix-loop-helix-Per-Arnt-Sim (PAS) domain of transcription factors or coactivators, such as NCOA2. During ER-activation acts synergistically in combination with other NCOA2-binding proteins, such as EP300, CREBBP and CARM1. Involved in the transcriptional activation of target genes in the Wnt/CTNNB1 pathway. Functions as a secondary coactivator in LEF1-mediated transcriptional activation via its interaction with CTNNB1. Coactivator function for nuclear receptors and LEF1/CTNNB1 involves differential utilization of two different activation regions. In association with CCAR1 enhances GATA1- and MED1-mediated transcriptional activation from the gamma-globin promoter during erythroid differentiation of K562 erythroleukemia cells. This chain is Calcium-binding and coiled-coil domain-containing protein 1 (Calcoco1), found in Mus musculus (Mouse).